Reading from the N-terminus, the 113-residue chain is Cell cycle protein GpsB (113 aa).

Residues 32 to 71 (LDNVIKDYESFTKDNQQLSDENERLRAKVDELTKQVAVGA) adopt a coiled-coil conformation.

This sequence belongs to the GpsB family. As to quaternary structure, forms polymers through the coiled coil domains. Interacts with PBP1, MreC and EzrA.

It is found in the cytoplasm. In terms of biological role, divisome component that associates with the complex late in its assembly, after the Z-ring is formed, and is dependent on DivIC and PBP2B for its recruitment to the divisome. Together with EzrA, is a key component of the system that regulates PBP1 localization during cell cycle progression. Its main role could be the removal of PBP1 from the cell pole after pole maturation is completed. Also contributes to the recruitment of PBP1 to the division complex. Not essential for septum formation. The sequence is that of Cell cycle protein GpsB from Lactiplantibacillus plantarum (strain ATCC BAA-793 / NCIMB 8826 / WCFS1) (Lactobacillus plantarum).